Reading from the N-terminus, the 246-residue chain is Eukaryotic translation initiation factor 6 (246 aa).

Phosphoserine; by CK1 is present on residues S174 and S175.

The protein belongs to the eIF-6 family. As to quaternary structure, monomer. Associates with the 60S ribosomal subunit. In terms of processing, phosphorylation at Ser-174 and Ser-175 promotes nuclear export.

It localises to the cytoplasm. Its subcellular location is the nucleus. The protein resides in the nucleolus. Functionally, binds to the 60S ribosomal subunit and prevents its association with the 40S ribosomal subunit to form the 80S initiation complex in the cytoplasm. Is also involved in ribosome biogenesis. Associates with pre-60S subunits in the nucleus and is involved in its nuclear export. The polypeptide is Eukaryotic translation initiation factor 6 (Verticillium alfalfae (strain VaMs.102 / ATCC MYA-4576 / FGSC 10136) (Verticillium wilt of alfalfa)).